The primary structure comprises 362 residues: Holliday junction branch migration complex subunit RuvB (362 aa).

Residues 1-183 (MADSSLVGGG…FGFTGHLEFY (183 aa)) form a large ATPase domain (RuvB-L) region. Residues L22, R23, G64, K67, T68, T69, 130–132 (EDF), R173, Y183, and R220 contribute to the ATP site. A Mg(2+)-binding site is contributed by T68. The tract at residues 184 to 254 (SVEELELVLR…TASAALDMYE (71 aa)) is small ATPAse domain (RuvB-S). The interval 257–362 (KRGLDRLDRS…PVAEWLPNGQ (106 aa)) is head domain (RuvB-H). Residues R312 and R317 each contribute to the DNA site.

This sequence belongs to the RuvB family. Homohexamer. Forms an RuvA(8)-RuvB(12)-Holliday junction (HJ) complex. HJ DNA is sandwiched between 2 RuvA tetramers; dsDNA enters through RuvA and exits via RuvB. An RuvB hexamer assembles on each DNA strand where it exits the tetramer. Each RuvB hexamer is contacted by two RuvA subunits (via domain III) on 2 adjacent RuvB subunits; this complex drives branch migration. In the full resolvosome a probable DNA-RuvA(4)-RuvB(12)-RuvC(2) complex forms which resolves the HJ.

The protein resides in the cytoplasm. The enzyme catalyses ATP + H2O = ADP + phosphate + H(+). Functionally, the RuvA-RuvB-RuvC complex processes Holliday junction (HJ) DNA during genetic recombination and DNA repair, while the RuvA-RuvB complex plays an important role in the rescue of blocked DNA replication forks via replication fork reversal (RFR). RuvA specifically binds to HJ cruciform DNA, conferring on it an open structure. The RuvB hexamer acts as an ATP-dependent pump, pulling dsDNA into and through the RuvAB complex. RuvB forms 2 homohexamers on either side of HJ DNA bound by 1 or 2 RuvA tetramers; 4 subunits per hexamer contact DNA at a time. Coordinated motions by a converter formed by DNA-disengaged RuvB subunits stimulates ATP hydrolysis and nucleotide exchange. Immobilization of the converter enables RuvB to convert the ATP-contained energy into a lever motion, pulling 2 nucleotides of DNA out of the RuvA tetramer per ATP hydrolyzed, thus driving DNA branch migration. The RuvB motors rotate together with the DNA substrate, which together with the progressing nucleotide cycle form the mechanistic basis for DNA recombination by continuous HJ branch migration. Branch migration allows RuvC to scan DNA until it finds its consensus sequence, where it cleaves and resolves cruciform DNA. The polypeptide is Holliday junction branch migration complex subunit RuvB (Arthrobacter sp. (strain FB24)).